Here is a 126-residue protein sequence, read N- to C-terminus: Fluoride-specific ion channel FluC (126 aa).

Transmembrane regions (helical) follow at residues 4 to 24 (SLLS…FVGL), 35 to 55 (LGTI…IALF), 67 to 87 (FVIT…AEVI), and 97 to 117 (FAIA…VLGL). 2 residues coordinate Na(+): Gly74 and Thr77.

It belongs to the fluoride channel Fluc/FEX (TC 1.A.43) family.

The protein resides in the cell inner membrane. The enzyme catalyses fluoride(in) = fluoride(out). Its activity is regulated as follows. Na(+) is not transported, but it plays an essential structural role and its presence is essential for fluoride channel function. In terms of biological role, fluoride-specific ion channel. Important for reducing fluoride concentration in the cell, thus reducing its toxicity. This Acinetobacter baylyi (strain ATCC 33305 / BD413 / ADP1) protein is Fluoride-specific ion channel FluC.